Here is a 144-residue protein sequence, read N- to C-terminus: Transcriptional regulator SlyA (144 aa).

Residues 2–135 (ESPLGSDLAR…LIKLIAKLEH (134 aa)) enclose the HTH marR-type domain. A DNA-binding region (H-T-H motif) is located at residues 49–72 (QIQLAKAIGIEQPSLVRTLDQLED).

Belongs to the SlyA family. Homodimer.

Its subcellular location is the cytoplasm. Functionally, transcription regulator that can specifically activate or repress expression of target genes. Required for virulence and survival in the macrophage environment. Probably activates the transcription of ssrB. Independently of ssrB activation, capable of stimulating the expression of virulence genes found on pathogenicity island 2 (SPI2). Probably activates expression of ispA, xseB genes, and of omp operon. In Salmonella typhimurium (strain LT2 / SGSC1412 / ATCC 700720), this protein is Transcriptional regulator SlyA.